Here is a 263-residue protein sequence, read N- to C-terminus: Hatching enzyme 1.2 (263 aa).

An N-terminal signal peptide occupies residues M1–A19. The propeptide at S20–R64 is activation peptide. The Peptidase M12A domain occupies N65–C263. 3 cysteine pairs are disulfide-bonded: C69–C74, C114–C263, and C135–C155. H163 serves as a coordination point for Zn(2+). Residue E164 is part of the active site. Residues H167 and H173 each coordinate Zn(2+).

Zn(2+) serves as cofactor. Expressed in cells of the hatching gland.

It is found in the secreted. It carries out the reaction Hydrolysis of the inner layer of fish egg envelope. Also hydrolysis of casein and small molecule substrates such as succinyl-Leu-Leu-Val-Tyr-|-7-(4-methyl)coumarylamide.. Functionally, metalloendopeptidase which participates in the breakdown of the egg envelope at the time of hatching. Cleaves the N-terminal regions of the zona pellucia glycoproteins ZP2 and ZP3, where it specifically recognizes the peptide sequences TVQQS-|-DYLIK (major site) and KLMLK-|-APEPF (minor site). The sequence is that of Hatching enzyme 1.2 from Danio rerio (Zebrafish).